The following is a 239-amino-acid chain: Cysteine-rich venom protein natrin-1 (239 aa).

The signal sequence occupies residues 1–18 (MIAFSLLCFAAVLQQSFG). The SCP domain occupies 37–165 (VDLHNSLRRR…AWSYFYVCQY (129 aa)). 8 cysteine pairs are disulfide-bonded: cysteine 74–cysteine 152, cysteine 91–cysteine 166, cysteine 147–cysteine 163, cysteine 185–cysteine 192, cysteine 188–cysteine 197, cysteine 201–cysteine 234, cysteine 210–cysteine 228, and cysteine 219–cysteine 232. The region spanning 201 to 234 (CTIYNKLTNCDSLLKQSSCQDDWIKSNCPASCFC) is the ShKT domain.

Expressed by the venom gland.

Its subcellular location is the secreted. Functionally, inhibits calcium-activated potassium channels (KCa1.1/KCNMA1), voltage-gated potassium channel Kv1.3/KCNA3, and the calcium release channel/ryanodine receptor (RyR). Binds specifically to type 1 RyR (RyR1) from skeletal muscle. Inhibit both the binding of ryanodine to RyR1, and RyR1's calcium-channel activity. Inhibits carbachol-induced muscle contraction and weakly blocks muscle contraction evoked by potassium. In Naja atra (Chinese cobra), this protein is Cysteine-rich venom protein natrin-1.